A 353-amino-acid polypeptide reads, in one-letter code: A-kinase anchor protein 7 isoforms delta and gamma (353 aa).

2 stretches are compositionally biased toward basic and acidic residues: residues 1-22 (MERP…RGEE) and 66-76 (RSKENRGDRND). 2 disordered regions span residues 1 to 33 (MERP…SPVG) and 47 to 85 (DDCG…KKAK). Residues threonine 134 and 224–226 (HLT) contribute to the AMP site. Residues threonine 134 and 224-226 (HLT) each bind CMP. Residues 299–353 (AELVRLSKRLVENAVLKAVQQYLEETQNKKQPGEGNSVKAEEGDRNGDGSDNNRK) form a PKA-RII-alpha subunit binding domain region. The segment at 300–324 (ELVRLSKRLVENAVLKAVQQYLEET) is RI-alpha-binding. Residues 301–314 (LVRLSKRLVENAVL) form an RII-binding region. Positions 321–353 (LEETQNKKQPGEGNSVKAEEGDRNGDGSDNNRK) are disordered. Positions 337–353 (KAEEGDRNGDGSDNNRK) are enriched in basic and acidic residues.

In terms of assembly, binds cAMP-dependent protein kinase (PKA). Interacts with PRKCA; only the cytoplasmic form is capable of interacting with PRKCA. Expressed highly in the heart, and moderately in brain, lung, liver, kidney and testis. Hardly detectable in spleen and skeletal muscle. In kidney, isoform Delta is expressed in the principal cells of the IMCD.

The protein localises to the nucleus. It localises to the cytoplasm. Its subcellular location is the cell membrane. Functionally, probably targets cAMP-dependent protein kinase (PKA) to the cellular membrane or cytoskeletal structures. The membrane-associated form reduces epithelial sodium channel (ENaC) activity, whereas the free cytoplasmic form may negatively regulate ENaC channel feedback inhibition by intracellular sodium. Isoform Delta may be involved in shuttling aquaporin-2 (AQP2) to the plasma membrane. The sequence is that of A-kinase anchor protein 7 isoforms delta and gamma from Rattus norvegicus (Rat).